Reading from the N-terminus, the 185-residue chain is Cytidylate kinase (185 aa).

Gly-8–Thr-16 lines the ATP pocket.

It belongs to the cytidylate kinase family. Type 2 subfamily.

The protein resides in the cytoplasm. It carries out the reaction CMP + ATP = CDP + ADP. The catalysed reaction is dCMP + ATP = dCDP + ADP. This chain is Cytidylate kinase, found in Desulfurococcus amylolyticus (strain DSM 18924 / JCM 16383 / VKM B-2413 / 1221n) (Desulfurococcus kamchatkensis).